The sequence spans 450 residues: UPF0210 protein CPF_1748 (450 aa).

It belongs to the UPF0210 family. As to quaternary structure, homodimer.

The protein is UPF0210 protein CPF_1748 of Clostridium perfringens (strain ATCC 13124 / DSM 756 / JCM 1290 / NCIMB 6125 / NCTC 8237 / Type A).